The chain runs to 615 residues: Nuclear receptor subfamily 1 group D member 1 (615 aa).

The segment covering 1 to 12 (MTTLDSNNNTGG) has biased composition (polar residues). Residues 1 to 70 (MTTLDSNNNT…TQDPARSFGT (70 aa)) form a required for phosphorylation by CSNK1E and cytoplasmic localization region. The tract at residues 1 to 120 (MTTLDSNNNT…SSRVSPSKGT (120 aa)) is disordered. The interval 1-129 (MTTLDSNNNT…TSNITKLNGM (129 aa)) is modulating. Residues 14 to 34 (ITYIGSSGSSPSRTSPESLYS) are compositionally biased toward low complexity. Polar residues predominate over residues 35-48 (DSSNGSFQSLTQGC). Residues 49–285 (PTYFPPSPTG…PPRSPSPEPT (237 aa)) are crucial for activation of GJA1. A phosphoserine; by GSK3-beta mark is found at Ser55 and Ser59. Positions 72–103 (PPSLSDDSSPSSASSSSSSSSSSFYNGSPPGS) are enriched in low complexity. Residues 130–206 (VLLCKVCGDV…VGMSRDAVRF (77 aa)) constitute a DNA-binding region (nuclear receptor). 2 NR C4-type zinc fingers span residues 133–153 (CKVCGDVASGFHYGVHACEGC) and 170–194 (CLKNENCSIVRINRNRCQQCRFKKC). N6-acetyllysine; by KAT5 is present on residues Lys192 and Lys193. Disordered stretches follow at residues 235–287 (LCPL…PTVE), 312–337 (PGNFNANHASGSPPATTPQCWESQGC), and 357–385 (NGLRQGPSSYPPTWPSGPAHHSCHQPNSN). Residues 253–262 (PSPPPAPAPT) are compositionally biased toward pro residues. Thr275 is subject to Phosphothreonine; by CDK1. The NR LBD domain occupies 285 to 615 (TVEDVISQVA…KLLSFRVDAQ (331 aa)). Lys401 carries the post-translational modification N6-acetyllysine. Residue Cys419 coordinates heme. The residue at position 592 (Lys592) is an N6-acetyllysine. His603 contacts heme.

This sequence belongs to the nuclear hormone receptor family. NR1 subfamily. Binds DNA as a monomer or a homodimer. Interacts with C1D, NR2E3, SP1 and ZNHIT1. Interacts with OPHN1 (via C-terminus). Interacts with PER2; the interaction associates PER2 to BMAL1 promoter region. Interacts with CRY1. Interacts with CCAR2. Interacts with SIAH2. Interacts with FBXW7 and CDK1. Interacts with HUWE1. Interacts with NR0B2. Interacts with NFIL3. Interacts (via domain NR LBD) with HSP90AA1 and HSP90AB1. In terms of processing, ubiquitinated, leading to its proteasomal degradation. Ubiquitinated by the SCF(FBXW7) complex when phosphorylated by CDK1 leading to its proteasomal degradation. Ubiquitinated by SIAH2; leading to its proteasomal degradation. Rapidly ubiquitinated in response to inflammatory triggers and sumoylation is a prerequisite to its ubiquitination. Post-translationally, sumoylated by UBE2I, desumoylated by SENP1, and sumoylation is a prerequisite to its ubiquitination. Phosphorylated by CSNK1E; phosphorylation enhances its cytoplasmic localization. In terms of processing, undergoes lysosome-mediated degradation in a time-dependent manner in the liver.

The protein localises to the nucleus. It is found in the cytoplasm. Its subcellular location is the cell projection. It localises to the dendrite. The protein resides in the dendritic spine. Transcriptional repressor which coordinates circadian rhythm and metabolic pathways in a heme-dependent manner. Integral component of the complex transcription machinery that governs circadian rhythmicity and forms a critical negative limb of the circadian clock by directly repressing the expression of core clock components BMAL1, CLOCK and CRY1. Also regulates genes involved in metabolic functions, including lipid and bile acid metabolism, adipogenesis, gluconeogenesis and the macrophage inflammatory response. Acts as a receptor for heme which stimulates its interaction with the NCOR1/HDAC3 corepressor complex, enhancing transcriptional repression. Recognizes two classes of DNA response elements within the promoter of its target genes and can bind to DNA as either monomers or homodimers, depending on the nature of the response element. Binds as a monomer to a response element composed of the consensus half-site motif 5'-[A/G]GGTCA-3' preceded by an A/T-rich 5' sequence (RevRE), or as a homodimer to a direct repeat of the core motif spaced by two nucleotides (RevDR-2). Acts as a potent competitive repressor of ROR alpha (RORA) function and regulates the levels of its ligand heme by repressing the expression of PPARGC1A, a potent inducer of heme synthesis. Regulates lipid metabolism by repressing the expression of APOC3 and by influencing the activity of sterol response element binding proteins (SREBPs); represses INSIG2 which interferes with the proteolytic activation of SREBPs which in turn govern the rhythmic expression of enzymes with key functions in sterol and fatty acid synthesis. Regulates gluconeogenesis via repression of G6PC1 and PEPCK and adipocyte differentiation via repression of PPARG. Regulates glucagon release in pancreatic alpha-cells via the AMPK-NAMPT-SIRT1 pathway and the proliferation, glucose-induced insulin secretion and expression of key lipogenic genes in pancreatic-beta cells. Positively regulates bile acid synthesis by increasing hepatic expression of CYP7A1 via repression of NR0B2 and NFIL3 which are negative regulators of CYP7A1. Modulates skeletal muscle oxidative capacity by regulating mitochondrial biogenesis and autophagy; controls mitochondrial biogenesis and respiration by interfering with the STK11-PRKAA1/2-SIRT1-PPARGC1A signaling pathway. Represses the expression of SERPINE1/PAI1, an important modulator of cardiovascular disease and the expression of inflammatory cytokines and chemokines in macrophages. Represses gene expression at a distance in macrophages by inhibiting the transcription of enhancer-derived RNAs (eRNAs). Plays a role in the circadian regulation of body temperature and negatively regulates thermogenic transcriptional programs in brown adipose tissue (BAT); imposes a circadian oscillation in BAT activity, increasing body temperature when awake and depressing thermogenesis during sleep. In concert with NR2E3, regulates transcriptional networks critical for photoreceptor development and function. In addition to its activity as a repressor, can also act as a transcriptional activator. In the ovarian granulosa cells acts as a transcriptional activator of STAR which plays a role in steroid biosynthesis. In collaboration with SP1, activates GJA1 transcription in a heme-independent manner. Represses the transcription of CYP2B10, CYP4A10 and CYP4A14. Represses the transcription of CES2. Represses and regulates the circadian expression of TSHB in a NCOR1-dependent manner. Negatively regulates the protein stability of NR3C1 and influences the time-dependent subcellular distribution of NR3C1, thereby affecting its transcriptional regulatory activity. Plays a critical role in the circadian control of neutrophilic inflammation in the lung; under resting, non-stress conditions, acts as a rhythmic repressor to limit inflammatory activity whereas in the presence of inflammatory triggers undergoes ubiquitin-mediated degradation thereby relieving inhibition of the inflammatory response. Plays a key role in the circadian regulation of microglial activation and neuroinflammation; suppresses microglial activation through the NF-kappaB pathway in the central nervous system. Plays a role in the regulation of the diurnal rhythms of lipid and protein metabolism in the skeletal muscle via transcriptional repression of genes controlling lipid and amino acid metabolism in the muscle. In Rattus norvegicus (Rat), this protein is Nuclear receptor subfamily 1 group D member 1 (Nr1d1).